The sequence spans 404 residues: Transcriptional repressor OPI1 (404 aa).

A Phosphoserine modification is found at Ser-10. The disordered stretch occupies residues 25–51 (QSCRQKSQPSEDVSQADKMPASESSTT). Residues 26-37 (SCRQKSQPSEDV) are compositionally biased toward polar residues. Positions 109–138 (KRQKLSRAIAKGKDNLKEYKLNMSIESKKR) are basic motif. Residues 139–160 (LVTCLHLLKLANKQLSDKISCL) are leucine-zipper. Disordered stretches follow at residues 170-201 (HPLH…DEEF), 305-327 (LQQQ…SSVT), and 378-404 (QQQQ…DSKD). Positions 186–201 (GEDETSSDEDDDDEEF) are enriched in acidic residues. Positions 200-206 (EFFDASE) match the FFAT motif. Low complexity predominate over residues 378 to 387 (QQQQYRQQQQ). Positions 394-404 (KPSQDNVDSKD) are enriched in polar residues.

As to quaternary structure, interacts with SCS2.

It localises to the endoplasmic reticulum. It is found in the nucleus. Functionally, negative regulator of the transcriptional complex INO2-INO4 in response to phospholipid precursor availability. When precursors become limiting, OPI1 is retained at the endoplasmic reticulum (ER) and INO2-INO4 activates INO1 and other genes required for phospholipid biosynthesis, whereas abundant precursor availability results in targeting of OPI1 to the nucleus to repress transcription of these genes. Binds directly to phosphatidic acid, which is required for ER targeting and may act as sensing mechanism for precursor availability, as phosphatidic acid becomes rapidly depleted upon phospholipid biosynthesis. This Saccharomyces cerevisiae (strain ATCC 204508 / S288c) (Baker's yeast) protein is Transcriptional repressor OPI1 (OPI1).